The primary structure comprises 423 residues: Probable efflux pump mfs2 (423 aa).

A run of 11 helical transmembrane segments spans residues 21–41, 49–69, 79–99, 111–131, 138–158, 220–240, 256–278, 295–315, 319–339, 360–380, and 392–411; these read TMAL…IGPV, SIFH…GFAH, LLAG…LGDV, LYLL…GFIV, WMFW…LLFH, AILE…FSAL, YIVI…DYAY, IPLL…YGWA, HLIW…MQIF, AATQ…SNSL, and LLAF…LWRW.

This sequence belongs to the major facilitator superfamily.

Its subcellular location is the membrane. Its function is as follows. Probable efflux pump; part of the gene cluster 27 that mediates the biosynthesis of asparasone A, a sclerotium-specific anthraquinone pigment important for sclerotial survival. This chain is Probable efflux pump mfs2, found in Aspergillus flavus (strain ATCC 200026 / FGSC A1120 / IAM 13836 / NRRL 3357 / JCM 12722 / SRRC 167).